The following is a 256-amino-acid chain: Galactitol 2-dehydrogenase (256 aa).

Residues 15–17 (RGI), Asp36, 59–60 (DV), Asn86, Tyr152, and Lys156 contribute to the NAD(+) site. Tyr152 serves as the catalytic Proton acceptor.

Belongs to the short-chain dehydrogenases/reductases (SDR) family.

The catalysed reaction is galactitol + NAD(+) = keto-D-tagatose + NADH + H(+). It carries out the reaction keto-D-fructose + NADH + H(+) = D-sorbitol + NAD(+). Its pathway is carbohydrate metabolism. Functionally, involved in galactitol catabolism. Catalyzes the oxidation of galactitol to D-tagatose. Can also catalyze the oxidation of D-sorbitol to D-fructose. In Agrobacterium fabrum (strain C58 / ATCC 33970) (Agrobacterium tumefaciens (strain C58)), this protein is Galactitol 2-dehydrogenase.